The chain runs to 486 residues: Membrane-bound lytic murein transglycosylase F (486 aa).

Residues 1-21 (MTRIKLNYFVIGVVALLLALA) form the signal peptide. The non-LT domain stretch occupies residues 22-268 (LWPNIPWRNG…RLEEKYLGHV (247 aa)). The interval 269–486 (GSFDYVDTKT…VVGPGWSINN (218 aa)) is LT domain. The active site involves Glu-313.

This sequence in the N-terminal section; belongs to the bacterial solute-binding protein 3 family. The protein in the C-terminal section; belongs to the transglycosylase Slt family.

The protein resides in the cell outer membrane. The enzyme catalyses Exolytic cleavage of the (1-&gt;4)-beta-glycosidic linkage between N-acetylmuramic acid (MurNAc) and N-acetylglucosamine (GlcNAc) residues in peptidoglycan, from either the reducing or the non-reducing ends of the peptidoglycan chains, with concomitant formation of a 1,6-anhydrobond in the MurNAc residue.. Murein-degrading enzyme that degrades murein glycan strands and insoluble, high-molecular weight murein sacculi, with the concomitant formation of a 1,6-anhydromuramoyl product. Lytic transglycosylases (LTs) play an integral role in the metabolism of the peptidoglycan (PG) sacculus. Their lytic action creates space within the PG sacculus to allow for its expansion as well as for the insertion of various structures such as secretion systems and flagella. The protein is Membrane-bound lytic murein transglycosylase F of Yersinia enterocolitica serotype O:8 / biotype 1B (strain NCTC 13174 / 8081).